The sequence spans 98 residues: Sm-like protein LSM8 (98 aa).

The Sm domain occupies 2–78 (AATTGLETLV…IGVIGELDEE (77 aa)).

The protein belongs to the snRNP Sm proteins family. In terms of assembly, component of the heptameric LSM2-LSM8 complex that forms a seven-membered ring structure with a donut shape. The LSM subunits are arranged in the order LSM8, LSM2, LSM3, LSM6, LSM5, LSM7 and LSM4. LSM8 subunit interacts only with its two neighboring subunits, LSM2 and LSM4. Interacts with the prefoldin co-chaperone subunits PFD1, PFD2, PFD3, PFD4, PFD5 and PFD6. As to expression, expressed in roots, leaves, stems, flowers and siliques.

The protein localises to the nucleus. Its function is as follows. Component of the nuclear LSM2-LSM8 complex which is involved splicing nuclear mRNAs. LSM2-LSM8 binds directly to the U6 small nuclear RNAs (snRNAs). LSM8 is essential for the formation of the nuclear LSM2-LSM8 complex involved in the accurate splicing of selected development-related mRNAs through the stabilization of the spliceosomal U6 snRNA. Plays a critical role in the regulation of development-related gene expression. The sequence is that of Sm-like protein LSM8 from Arabidopsis thaliana (Mouse-ear cress).